The chain runs to 189 residues: Resolvase (189 aa).

The region spanning 1–139 is the Resolvase/invertase-type recombinase catalytic domain; sequence MLVGYARVST…EGLRSAKARG (139 aa). Ser9 serves as the catalytic O-(5'-phospho-DNA)-serine intermediate. A disordered region spans residues 130-151; sequence EGLRSAKARGRNGGRPSKRNDK. The segment at residues 165-184 is a DNA-binding region (H-T-H motif); it reads IVDIVKQTELSRATVYRILK.

This sequence belongs to the site-specific recombinase resolvase family.

A likely role for the res protein would be to stabilize pCP13 by reducing the number of plasmid multimers resulting from homologous recombination. The protein is Resolvase (res) of Clostridium perfringens (strain 13 / Type A).